Reading from the N-terminus, the 101-residue chain is Small ribosomal subunit protein uS14 (101 aa).

This sequence belongs to the universal ribosomal protein uS14 family. As to quaternary structure, part of the 30S ribosomal subunit. Contacts proteins S3 and S10.

In terms of biological role, binds 16S rRNA, required for the assembly of 30S particles and may also be responsible for determining the conformation of the 16S rRNA at the A site. This Burkholderia vietnamiensis (strain G4 / LMG 22486) (Burkholderia cepacia (strain R1808)) protein is Small ribosomal subunit protein uS14.